The sequence spans 377 residues: Compound eye opsin BCRH1 (377 aa).

Topologically, residues 1–53 (MANVTGPQMAFYGSGAATFGYPEGMTVADFVPDRVKHMVLDHWYNYPPVNPMW) are extracellular. Residue Asn-3 is glycosylated (N-linked (GlcNAc...) asparagine). Residues 54–78 (HYLLGVVYLFLGVISIAGNGLVIYL) form a helical membrane-spanning segment. Topologically, residues 79–90 (YMKSQALKTPAN) are cytoplasmic. A helical transmembrane segment spans residues 91 to 115 (MLIVNLALSDLIMLTTNFPPFCYNC). Residues 116–131 (FSGGRWMFSGTYCEIY) are Extracellular-facing. Cys-128 and Cys-205 are joined by a disulfide. The helical transmembrane segment at 132–151 (AALGAITGVCSIWTLCMISF) threads the bilayer. Residues 152 to 170 (DRYNIICNGFNGPKLTQGK) are Cytoplasmic-facing. Residues 171–194 (ATFMCGLAWVISVGWSLPPFFGWG) form a helical membrane-spanning segment. Over 195–218 (SYTLEGILDSCSYDYFTRDMNTIT) the chain is Extracellular. The chain crosses the membrane as a helical span at residues 219 to 246 (YNICIFIFDFFLPASVIVFSYVFIVKAI). Residues 247 to 281 (FAHEAAMRAQAKKMNVTNLRSNEAETQRAEIRIAK) lie on the Cytoplasmic side of the membrane. A helical membrane pass occupies residues 282–305 (TALVNVSLWFICWTPYAAITIQGL). The Extracellular segment spans residues 306–313 (LGNAEGIT). A helical transmembrane segment spans residues 314–338 (PLLTTLPALLAKSCSCYNPFVYAIS). Residue Lys-325 is modified to N6-(retinylidene)lysine. The Cytoplasmic portion of the chain corresponds to 339 to 377 (HPKFRLAITQHLPWFCVHEKDPNDVEENQSSNTQTQEKS).

It belongs to the G-protein coupled receptor 1 family. Opsin subfamily. Phosphorylated on some or all of the serine and threonine residues present in the C-terminal region. In terms of tissue distribution, expressed in all of the seven retinular cells (R1-R7) forming the main rhabdom in each ommatidium.

The protein resides in the membrane. Its function is as follows. Visual pigments are the light-absorbing molecules that mediate vision. They consist of an apoprotein, opsin, covalently linked to cis-retinal. This opsin produces visual pigments with maximal absorption in the blue-green region of the spectrum. This chain is Compound eye opsin BCRH1, found in Hemigrapsus sanguineus (Asian shore crab).